The primary structure comprises 338 residues: Fructose-1,6-bisphosphatase 1 (338 aa).

The residue at position 2 (Ala2) is an N-acetylalanine. AMP contacts are provided by residues 18–22 (VMEEG) and 28–32 (TGELT). 2 residues coordinate Mg(2+): Asp69 and Glu98. 113-114 (KY) is an AMP binding site. Mg(2+) contacts are provided by Asp119, Leu121, and Asp122. 122-125 (DGSS) lines the substrate pocket. Arg141 provides a ligand contact to AMP. N6-succinyllysine is present on Lys151. Substrate is bound by residues 213-216 (NEGY), 244-249 (RYVGSM), Tyr265, and 275-277 (KLR). A phosphotyrosine mark is found at Tyr216, Tyr245, and Tyr265. Glu281 provides a ligand contact to Mg(2+).

Belongs to the FBPase class 1 family. As to quaternary structure, homotetramer. Mg(2+) serves as cofactor. Expressed in pancreatic islets.

The enzyme catalyses beta-D-fructose 1,6-bisphosphate + H2O = beta-D-fructose 6-phosphate + phosphate. Its pathway is carbohydrate biosynthesis; gluconeogenesis. Its activity is regulated as follows. Subject to complex allosteric regulation. The enzyme can assume an active R-state, or an inactive T-state. Intermediate conformations may exist. AMP acts as an allosteric inhibitor. AMP binding affects the turnover of bound substrate and not the affinity for substrate. Fructose 2,6-bisphosphate acts as a competitive inhibitor. Fructose 2,6-bisphosphate and AMP have synergistic effects. Functionally, catalyzes the hydrolysis of fructose 1,6-bisphosphate to fructose 6-phosphate in the presence of divalent cations, acting as a rate-limiting enzyme in gluconeogenesis. Plays a role in regulating glucose sensing and insulin secretion of pancreatic beta-cells. Appears to modulate glycerol gluconeogenesis in liver. Important regulator of appetite and adiposity; increased expression of the protein in liver after nutrient excess increases circulating satiety hormones and reduces appetite-stimulating neuropeptides and thus seems to provide a feedback mechanism to limit weight gain. This Homo sapiens (Human) protein is Fructose-1,6-bisphosphatase 1 (FBP1).